The primary structure comprises 182 residues: Ribosome maturation factor RimM (182 aa).

Residues 103–182 form the PRC barrel domain; the sequence is EDDYYWKDLM…RVEVDWDPGF (80 aa).

This sequence belongs to the RimM family. Binds ribosomal protein uS19.

It localises to the cytoplasm. An accessory protein needed during the final step in the assembly of 30S ribosomal subunit, possibly for assembly of the head region. Essential for efficient processing of 16S rRNA. May be needed both before and after RbfA during the maturation of 16S rRNA. It has affinity for free ribosomal 30S subunits but not for 70S ribosomes. The protein is Ribosome maturation factor RimM of Yersinia pestis (strain Pestoides F).